We begin with the raw amino-acid sequence, 159 residues long: Cytochrome c-type biogenesis protein CcmE (159 aa).

Topologically, residues 1 to 8 (MNPRRKKR) are cytoplasmic. Residues 9–29 (LLVIVAVLFGIGASIGLVLYA) traverse the membrane as a helical; Signal-anchor for type II membrane protein segment. Residues 30 to 159 (LQENINLFYT…KPKYNLDSGN (130 aa)) lie on the Periplasmic side of the membrane. H130 and Y134 together coordinate heme.

The protein belongs to the CcmE/CycJ family.

The protein localises to the cell inner membrane. Functionally, heme chaperone required for the biogenesis of c-type cytochromes. Transiently binds heme delivered by CcmC and transfers the heme to apo-cytochromes in a process facilitated by CcmF and CcmH. In Pseudoalteromonas translucida (strain TAC 125), this protein is Cytochrome c-type biogenesis protein CcmE.